The primary structure comprises 93 residues: Class I hydrophobin SSP1 (93 aa).

The first 26 residues, 1 to 26 (MKYITAISMLATAALTAATPLNGVEA), serve as a signal peptide directing secretion. Cystine bridges form between Cys-39–Cys-71, Cys-47–Cys-65, Cys-48–Cys-56, and Cys-72–Cys-89.

The protein belongs to the fungal hydrophobin family. In terms of assembly, self-assembles to form functional amyloid fibrils called rodlets. Self-assembly into fibrillar rodlets occurs spontaneously at hydrophobic:hydrophilic interfaces and the rodlets further associate laterally to form amphipathic monolayers.

It localises to the secreted. Its subcellular location is the cell wall. Aerial growth, conidiation, and dispersal of filamentous fungi in the environment rely upon a capability of their secreting small amphipathic proteins called hydrophobins (HPBs) with low sequence identity. Class I can self-assemble into an outermost layer of rodlet bundles on aerial cell surfaces, conferring cellular hydrophobicity that supports fungal growth, development and dispersal; whereas Class II form highly ordered films at water-air interfaces through intermolecular interactions but contribute nothing to the rodlet structure. SSP1 is a class I hydrophobin that acts as an effector in the ericoid mycorrhizal interaction with Vaccinium myrtillus. May enhance attachment of the fungus to the root surface and protect the fungal hypha from plant defense compounds. The chain is Class I hydrophobin SSP1 from Oidiodendron maius (strain Zn).